The sequence spans 520 residues: Rho GTPase-activating protein gacV (520 aa).

A helical membrane pass occupies residues 8-28; the sequence is NIKTYYIIGIITLIFIVSAVI. Positions 28–192 form a coiled coil; it reads IKNQLSSSNQ…EEQEEEQFSM (165 aa). Disordered stretches follow at residues 33–73, 121–189, 348–373, and 489–520; these read SSSN…KLDN, EEKQ…EEEQ, NNNN…NNNE, and LQEQ…DQEE. Over residues 52–62 the composition is skewed to basic residues; that stretch reads SKGRGNKKGKK. Residues 63-73 show a composition bias toward basic and acidic residues; the sequence is PEKIQEKKLDN. A compositionally biased stretch (acidic residues) spans 140–189; that stretch reads QEEEEEEEEQQEIEEDEEEEEGQEQEEEEEQQEIEEGEEEQQEEEQEEEQ. The 278-residue stretch at 195–472 folds into the Rho-GAP domain; the sequence is VSIERLMDFQ…ILLKQKKEIA (278 aa). The span at 348-372 shows a compositional bias: low complexity; it reads NNNNNNNNNNNNNNNNNNDNNNNNN. Positions 480–520 form a coiled coil; that stretch reads YFKDEYSKKLQEQNDQEEDNQEEEKDNQEEDEDEEDKDQEE. Residues 493-520 are compositionally biased toward acidic residues; the sequence is NDQEEDNQEEEKDNQEEDEDEEDKDQEE.

It is found in the membrane. In terms of biological role, rho GTPase-activating protein involved in the signal transduction pathway. The protein is Rho GTPase-activating protein gacV (gacV) of Dictyostelium discoideum (Social amoeba).